We begin with the raw amino-acid sequence, 297 residues long: uncharacterized protein (297 aa).

Glu-46 is a catalytic residue.

Belongs to the PhzF family. In terms of assembly, homodimer and homotetramer.

This is an uncharacterized protein from Escherichia coli (strain K12).